We begin with the raw amino-acid sequence, 347 residues long: uncharacterized protein (347 aa).

This is an uncharacterized protein from Saccharomyces cerevisiae (strain ATCC 204508 / S288c) (Baker's yeast).